Reading from the N-terminus, the 490-residue chain is UDP-glucosyl transferase 73M2 (490 aa).

The active-site Proton acceptor is H20. Catalysis depends on D124, which acts as the Charge relay. UDP contacts are provided by S297, W353, A354, H371, N375, S376, E379, and Y393.

Belongs to the UDP-glycosyltransferase family. Mainly expressed in flowers, flower buds and young leaves, and, to a lesser extent, in old leaves, stems and roots.

It participates in secondary metabolite biosynthesis; terpenoid biosynthesis. In terms of biological role, component of the oleanane-type triterpene saponins (e.g. saponarioside A and saponarioside B) biosynthetic pathway, leading to the production of natural products with detergent properties used as traditional sources of soap. A glycosyltransferase that mediates the conversion of QA-triFRX to QA-triFRXX via the elongation of the C-28 sugar chain with a D-xylose. The protein is UDP-glucosyl transferase 73M2 of Saponaria officinalis (Common soapwort).